The following is a 192-amino-acid chain: Adenylate kinase (192 aa).

10 to 15 (GAGKGT) contributes to the ATP binding site. An NMP region spans residues 30 to 59 (STGDMLRTAVAQATEVGKRAKAVMDAGQLV). AMP is bound by residues threonine 31, arginine 36, 57-59 (QLV), 85-88 (GYPR), and glutamine 92. The tract at residues 126 to 142 (NRVTETVAAGGTVRSDD) is LID. Arginine 127 contributes to the ATP binding site. Positions 139 and 150 each coordinate AMP. Alanine 178 serves as a coordination point for ATP.

The protein belongs to the adenylate kinase family. Monomer.

Its subcellular location is the cytoplasm. The enzyme catalyses AMP + ATP = 2 ADP. It participates in purine metabolism; AMP biosynthesis via salvage pathway; AMP from ADP: step 1/1. In terms of biological role, catalyzes the reversible transfer of the terminal phosphate group between ATP and AMP. Plays an important role in cellular energy homeostasis and in adenine nucleotide metabolism. This is Adenylate kinase from Rhizobium meliloti (strain 1021) (Ensifer meliloti).